The sequence spans 242 residues: Large ribosomal subunit protein uL2 (242 aa).

The disordered stretch occupies residues 201 to 242; that stretch reads VDHPFGGGRHQHTGKPTTVSRKKVPPGRKVGHISARRTGVRK. The segment covering 220–242 has biased composition (basic residues); it reads SRKKVPPGRKVGHISARRTGVRK.

It belongs to the universal ribosomal protein uL2 family. In terms of assembly, part of the 50S ribosomal subunit. Forms a bridge to the 30S subunit in the 70S ribosome.

One of the primary rRNA binding proteins. Required for association of the 30S and 50S subunits to form the 70S ribosome, for tRNA binding and peptide bond formation. It has been suggested to have peptidyltransferase activity; this is somewhat controversial. Makes several contacts with the 16S rRNA in the 70S ribosome. The chain is Large ribosomal subunit protein uL2 from Methanocaldococcus jannaschii (strain ATCC 43067 / DSM 2661 / JAL-1 / JCM 10045 / NBRC 100440) (Methanococcus jannaschii).